Consider the following 269-residue polypeptide: 3-methyl-2-oxobutanoate hydroxymethyltransferase (269 aa).

Mg(2+)-binding residues include Asp49 and Asp88. 3-methyl-2-oxobutanoate-binding positions include 49-50 (DS), Asp88, and Lys118. Glu120 serves as a coordination point for Mg(2+). The active-site Proton acceptor is the Glu186.

This sequence belongs to the PanB family. As to quaternary structure, homodecamer; pentamer of dimers. The cofactor is Mg(2+).

The protein resides in the cytoplasm. It carries out the reaction 3-methyl-2-oxobutanoate + (6R)-5,10-methylene-5,6,7,8-tetrahydrofolate + H2O = 2-dehydropantoate + (6S)-5,6,7,8-tetrahydrofolate. It functions in the pathway cofactor biosynthesis; (R)-pantothenate biosynthesis; (R)-pantoate from 3-methyl-2-oxobutanoate: step 1/2. Its function is as follows. Catalyzes the reversible reaction in which hydroxymethyl group from 5,10-methylenetetrahydrofolate is transferred onto alpha-ketoisovalerate to form ketopantoate. This is 3-methyl-2-oxobutanoate hydroxymethyltransferase from Pelobacter propionicus (strain DSM 2379 / NBRC 103807 / OttBd1).